A 692-amino-acid chain; its full sequence is Threonine--tRNA ligase (692 aa).

Residues 2 to 59 (AEAHISITVNGEAKEVEASQTGVELFADDKNIIAVRLNGELRDLYTPLHDGDNVESVT) enclose the TGS domain. The tract at residues 255–561 (DHRKLGQEMD…LLEHYAGAFP (307 aa)) is catalytic. Zn(2+) is bound by residues C360, H411, and H538.

Belongs to the class-II aminoacyl-tRNA synthetase family. As to quaternary structure, homodimer. Zn(2+) is required as a cofactor.

The protein resides in the cytoplasm. It carries out the reaction tRNA(Thr) + L-threonine + ATP = L-threonyl-tRNA(Thr) + AMP + diphosphate + H(+). Catalyzes the attachment of threonine to tRNA(Thr) in a two-step reaction: L-threonine is first activated by ATP to form Thr-AMP and then transferred to the acceptor end of tRNA(Thr). Also edits incorrectly charged L-seryl-tRNA(Thr). This is Threonine--tRNA ligase from Bifidobacterium animalis subsp. lactis (strain AD011).